The primary structure comprises 357 residues: uncharacterized protein (357 aa).

Residues 120–145 are disordered; it reads SSSTVNHDQPAEQPSDKSTDDSTGYP.

This is an uncharacterized protein from Caenorhabditis elegans.